A 123-amino-acid polypeptide reads, in one-letter code: Small ribosomal subunit protein uS13 (123 aa).

The disordered stretch occupies residues 89–123 (GRRHRSGLPVRGQRTRTNARTRKGKRKAVAKKKAK). The segment covering 101–123 (QRTRTNARTRKGKRKAVAKKKAK) has biased composition (basic residues).

This sequence belongs to the universal ribosomal protein uS13 family. Part of the 30S ribosomal subunit. Forms a loose heterodimer with protein S19. Forms two bridges to the 50S subunit in the 70S ribosome.

Its function is as follows. Located at the top of the head of the 30S subunit, it contacts several helices of the 16S rRNA. In the 70S ribosome it contacts the 23S rRNA (bridge B1a) and protein L5 of the 50S subunit (bridge B1b), connecting the 2 subunits; these bridges are implicated in subunit movement. Contacts the tRNAs in the A and P-sites. The chain is Small ribosomal subunit protein uS13 from Cutibacterium acnes (strain DSM 16379 / KPA171202) (Propionibacterium acnes).